The sequence spans 855 residues: Zinc finger protein 814 (855 aa).

The KRAB domain occupies 15 to 91 (VTFEDVAVNF…PMAGVSPKKA (77 aa)). The C2H2-type 1; degenerate zinc-finger motif lies at 120 to 142 (HRCEAWGNKLYDSGNFHQHQNEH). C2H2-type zinc fingers lie at residues 242–264 (YVCC…QRVH), 269–291 (HECG…QRVH), 296–318 (HECG…QRVH), 324–346 (YECG…QRVH), 352–374 (YECG…QRVH), 380–402 (YECG…QRVH), 408–430 (YECG…QRFH), 436–458 (YGCE…QRVH), 464–486 (FKCG…QRVH), 492–514 (YQCG…QRVH), 520–542 (YECG…QQIH), 548–570 (YECG…QRVH), 576–598 (YGCG…QRVH), 604–626 (YECG…QRMH), 632–654 (YKCG…QRVH), 660–682 (FKCG…QHGH), 688–710 (YVCR…QRIH), 716–738 (YACE…QRVH), 744–766 (YECN…KRIH), 772–794 (YECS…KRVH), 800–822 (YECS…KRVH), and 828–850 (YKCE…QSSH). Residue K335 forms a Glycyl lysine isopeptide (Lys-Gly) (interchain with G-Cter in SUMO2) linkage. K391 is covalently cross-linked (Glycyl lysine isopeptide (Lys-Gly) (interchain with G-Cter in SUMO2)).

The sequence is that of Zinc finger protein 814 (ZNF814) from Homo sapiens (Human).